The sequence spans 92 residues: Putative phosphotransferase enzyme IIB component BB_0367 (92 aa).

The PTS EIIB type-1 domain maps to 10 to 92; that stretch reads IKVAEHIVEC…ILYMMNEQKQ (83 aa).

The protein localises to the cytoplasm. Its function is as follows. The phosphoenolpyruvate-dependent sugar phosphotransferase system (PTS), a major carbohydrate active -transport system, catalyzes the phosphorylation of incoming sugar substrates concomitant with their translocation across the cell membrane. The polypeptide is Putative phosphotransferase enzyme IIB component BB_0367 (Borreliella burgdorferi (strain ATCC 35210 / DSM 4680 / CIP 102532 / B31) (Borrelia burgdorferi)).